Here is a 628-residue protein sequence, read N- to C-terminus: Choline transporter-like protein 2 (628 aa).

At 1–31 the chain is on the cytoplasmic side; the sequence is MSSEDLQDHHEIGNEVIKKKGVYTKKKCQDC. Residues 32 to 52 form a helical membrane-spanning segment; the sequence is FFLILFLLFWAGMIVVAAFGV. Residues 53-204 lie on the Extracellular side of the membrane; sequence KNGKPDRIVK…EILTDLTNSW (152 aa). N-linked (GlcNAc...) asparagine glycosylation is found at asparagine 82, asparagine 118, asparagine 146, and asparagine 168. The helical transmembrane segment at 205–225 threads the bilayer; it reads RYLIYGALIAMGLGLTWIFLL. A topological domain (cytoplasmic) is located at residue arginine 226. The helical transmembrane segment at 227-247 threads the bilayer; the sequence is FFAGFITWLTVFAAYACLGLL. Over 248–282 the chain is Extracellular; it reads TAQVYFQWQDSKDAYENTIPSQRLVMQEKNILALK. A helical membrane pass occupies residues 283–303; it reads VIFIILCVVCGIFALILLALF. At 304–319 the chain is on the cytoplasmic side; that stretch reads SRIRIAIRIIKECSRA. The helical transmembrane segment at 320-340 threads the bilayer; the sequence is IGIMPSIFFFPIFIFLLLCGF. Topologically, residues 341–381 are extracellular; that stretch reads TVYWVYIGVYLATAGSPTYDDQYRFTGYEADSKLQKIQIYH. The chain crosses the membrane as a helical span at residues 382-402; sequence FFGYLWTFAFILALNQTTIAG. The Cytoplasmic portion of the chain corresponds to 403-432; the sequence is AISSWYWVQDKKDTPFFPVWSSFFRVIRYH. The chain crosses the membrane as a helical span at residues 433–453; sequence LGSIALGSLILAIVQFIRWVL. The Extracellular segment spans residues 454 to 530; that stretch reads RFLEKKFKGK…RVAAVNLVSS (77 aa). Residues 531-551 form a helical membrane-spanning segment; the sequence is FLMFLGRVFITAATVGISLYL. Over 552–559 the chain is Cytoplasmic; that stretch reads LKEHENLS. The helical transmembrane segment at 560–580 threads the bilayer; that stretch reads FYIIPVILIGFIAFAISTGFM. Residues 581-628 lie on the Extracellular side of the membrane; sequence SVYDMSIDTMLLCFCEDCERNDGSPERPYYMSKSLRKFVDGKGRSKCC.

This sequence belongs to the CTL (choline transporter-like) family.

Its subcellular location is the cell membrane. It localises to the mitochondrion outer membrane. It catalyses the reaction choline(out) + n H(+)(in) = choline(in) + n H(+)(out). The enzyme catalyses ethanolamine(out) + n H(+)(in) = ethanolamine(in) + n H(+)(out). Choline/H+ antiporter, mainly in mitochodria. Also acts as a low-affinity ethanolamine/H+ antiporter, regulating the supply of extracellular ethanolamine (Etn) for the CDP-Etn pathway, redistribute intracellular Etn and balance the CDP-Cho and CDP-Etn arms of the Kennedy pathway. The chain is Choline transporter-like protein 2 (slc44a2) from Dictyostelium discoideum (Social amoeba).